A 324-amino-acid polypeptide reads, in one-letter code: MTSPSTIKQRFLSKPNQLGVVAVGFNGGQCKLGVEAAPMALVEAGLLDQLRDDLDYEIHYDNTVHYYEKEIPAEDPDHRGMKKPRAVSAVTETLSSQVYEHSKEGKFTLTLGGDHSIAIGSISGIAKATRERLGREIGVIWVDAHADINIPEMSPSGNIHGMPMAFLTRLATEEKKDIFGWLQEEHKVNLRKLVYIGLRDVDRGEKKLLREHGIKAFSMHDVDRHGIGRVVEMALAHIGNDTPIHLSFDVDALDPQWAPSTGTPVRGGLTLREGDFICECVHETGNLISMDLVEVNPSLEAVGASDTIRTGCSLVRSALGDTLL.

4 residues coordinate Mn(2+): His-115, Asp-143, His-145, and Asp-147. Residues 145–149 (HADIN), 156–158 (SGN), and Asp-202 contribute to the substrate site. Mn(2+) is bound by residues Asp-249 and Asp-251. Substrate contacts are provided by Thr-263 and Glu-294.

Belongs to the arginase family. Homotrimer. Mn(2+) serves as cofactor.

It catalyses the reaction L-arginine + H2O = urea + L-ornithine. It functions in the pathway nitrogen metabolism; urea cycle; L-ornithine and urea from L-arginine: step 1/1. The chain is Arginase (agaA) from Emericella nidulans (strain FGSC A4 / ATCC 38163 / CBS 112.46 / NRRL 194 / M139) (Aspergillus nidulans).